The chain runs to 110 residues: MDGTLFPGDDDLAIPATEFFSTKAAKKPEAKREAIVKADEDDNEETLKQRLTNLEKKITNVTTKFEQIEKCCKRNDEVLFRLENHAETLRAAMISLAKKIDVQTGRRPYE.

The stretch at 36–101 (VKADEDDNEE…AMISLAKKID (66 aa)) forms a coiled coil.

This sequence belongs to the orthopoxvirus OPG154 protein family. In terms of assembly, homohexamers, covalently linked. Interacts with OPG144 and OPG153.

The protein resides in the virion. Structural protein involved in the envelopment of mature virion (MV) to form the wrapped virion (WV). The wrapping consists of the addition of Golgi membranes to the mature virion. Participates in mature virion (MV) movement within the infected cell. May play an indirect role in MV-cell fusion. The sequence is that of Protein OPG154 (OPG154) from Vaccinia virus (strain Western Reserve) (VACV).